Here is a 186-residue protein sequence, read N- to C-terminus: Peptide deformylase (186 aa).

2 residues coordinate Fe cation: C99 and H141. E142 is a catalytic residue. H145 provides a ligand contact to Fe cation.

Belongs to the polypeptide deformylase family. Fe(2+) serves as cofactor.

The enzyme catalyses N-terminal N-formyl-L-methionyl-[peptide] + H2O = N-terminal L-methionyl-[peptide] + formate. Its function is as follows. Removes the formyl group from the N-terminal Met of newly synthesized proteins. Requires at least a dipeptide for an efficient rate of reaction. N-terminal L-methionine is a prerequisite for activity but the enzyme has broad specificity at other positions. The protein is Peptide deformylase of Chlamydia pneumoniae (Chlamydophila pneumoniae).